The following is a 502-amino-acid chain: Maturase K (502 aa).

This sequence belongs to the intron maturase 2 family. MatK subfamily.

It is found in the plastid. The protein localises to the chloroplast. In terms of biological role, usually encoded in the trnK tRNA gene intron. Probably assists in splicing its own and other chloroplast group II introns. The polypeptide is Maturase K (Theobroma cacao (Cacao)).